The primary structure comprises 288 residues: ATP synthase gamma chain (288 aa).

The protein belongs to the ATPase gamma chain family. F-type ATPases have 2 components, CF(1) - the catalytic core - and CF(0) - the membrane proton channel. CF(1) has five subunits: alpha(3), beta(3), gamma(1), delta(1), epsilon(1). CF(0) has three main subunits: a, b and c.

Its subcellular location is the cell inner membrane. Functionally, produces ATP from ADP in the presence of a proton gradient across the membrane. The gamma chain is believed to be important in regulating ATPase activity and the flow of protons through the CF(0) complex. The chain is ATP synthase gamma chain from Legionella pneumophila (strain Corby).